Here is a 249-residue protein sequence, read N- to C-terminus: tRNA pseudouridine synthase A (249 aa).

The Nucleophile role is filled by Asp53. Tyr111 lines the substrate pocket.

This sequence belongs to the tRNA pseudouridine synthase TruA family. As to quaternary structure, homodimer.

The catalysed reaction is uridine(38/39/40) in tRNA = pseudouridine(38/39/40) in tRNA. In terms of biological role, formation of pseudouridine at positions 38, 39 and 40 in the anticodon stem and loop of transfer RNAs. This Streptococcus mutans serotype c (strain ATCC 700610 / UA159) protein is tRNA pseudouridine synthase A.